A 124-amino-acid polypeptide reads, in one-letter code: Membrane-anchored ubiquitin-fold protein 2 (124 aa).

The Ubiquitin-like domain maps to 8–74; sequence LEIKFRLNDG…LENNKTVGDC (67 aa). 4 S-palmitoyl cysteine lipidation sites follow: Cys-115, Cys-117, Cys-119, and Cys-124.

Post-translationally, acylated protein. Probably modified with palmitate. In terms of tissue distribution, ubiquitous, but three fold higher expression in stamens.

The protein resides in the cell membrane. Its function is as follows. May serve as docking site to facilitate the association of other proteins to the plasma membrane. This is Membrane-anchored ubiquitin-fold protein 2 (MUB2) from Arabidopsis thaliana (Mouse-ear cress).